A 215-amino-acid polypeptide reads, in one-letter code: Pyrrolidone-carboxylate peptidase (215 aa).

Active-site residues include Glu80, Cys143, and His167.

The protein belongs to the peptidase C15 family. Homotetramer.

The protein resides in the cytoplasm. The enzyme catalyses Release of an N-terminal pyroglutamyl group from a polypeptide, the second amino acid generally not being Pro.. Its function is as follows. Removes 5-oxoproline from various penultimate amino acid residues except L-proline. This Pectobacterium carotovorum subsp. carotovorum (strain PC1) protein is Pyrrolidone-carboxylate peptidase.